Here is a 919-residue protein sequence, read N- to C-terminus: Phosphoenolpyruvate carboxylase (919 aa).

Residues His-138 and Lys-579 contribute to the active site.

Belongs to the PEPCase type 1 family. Mg(2+) serves as cofactor.

It catalyses the reaction oxaloacetate + phosphate = phosphoenolpyruvate + hydrogencarbonate. Its function is as follows. Forms oxaloacetate, a four-carbon dicarboxylic acid source for the tricarboxylic acid cycle. This Corynebacterium efficiens (strain DSM 44549 / YS-314 / AJ 12310 / JCM 11189 / NBRC 100395) protein is Phosphoenolpyruvate carboxylase (ppc).